A 501-amino-acid chain; its full sequence is Acetyl-coenzyme A carboxylase carboxyl transferase subunit beta, chloroplastic (501 aa).

The CoA carboxyltransferase N-terminal domain maps to 231–501 (LWIECENCYG…LIQNEKESRS (271 aa)). Positions 235, 238, 254, and 257 each coordinate Zn(2+). The C4-type zinc-finger motif lies at 235 to 257 (CENCYGLNYKKILKSKMNICEHC).

The protein belongs to the AccD/PCCB family. In terms of assembly, acetyl-CoA carboxylase is a heterohexamer composed of biotin carboxyl carrier protein, biotin carboxylase and 2 subunits each of ACCase subunit alpha and ACCase plastid-coded subunit beta (accD). Requires Zn(2+) as cofactor.

The protein resides in the plastid. The protein localises to the chloroplast stroma. The enzyme catalyses N(6)-carboxybiotinyl-L-lysyl-[protein] + acetyl-CoA = N(6)-biotinyl-L-lysyl-[protein] + malonyl-CoA. The protein operates within lipid metabolism; malonyl-CoA biosynthesis; malonyl-CoA from acetyl-CoA: step 1/1. Component of the acetyl coenzyme A carboxylase (ACC) complex. Biotin carboxylase (BC) catalyzes the carboxylation of biotin on its carrier protein (BCCP) and then the CO(2) group is transferred by the transcarboxylase to acetyl-CoA to form malonyl-CoA. The chain is Acetyl-coenzyme A carboxylase carboxyl transferase subunit beta, chloroplastic from Lotus japonicus (Lotus corniculatus var. japonicus).